Here is a 171-residue protein sequence, read N- to C-terminus: Protein X (171 aa).

3 consecutive transmembrane segments (helical) span residues 11-31 (SWYQ…IYSL), 38-58 (LAGI…VYLM), and 73-93 (AVIA…WLVI).

Its subcellular location is the virion membrane. The sequence is that of Protein X (VPX) from Mus musculus domesticus (western European house mouse).